A 90-amino-acid polypeptide reads, in one-letter code: Small ribosomal subunit protein uS17 (90 aa).

This sequence belongs to the universal ribosomal protein uS17 family. In terms of assembly, part of the 30S ribosomal subunit.

One of the primary rRNA binding proteins, it binds specifically to the 5'-end of 16S ribosomal RNA. The protein is Small ribosomal subunit protein uS17 of Paraburkholderia phymatum (strain DSM 17167 / CIP 108236 / LMG 21445 / STM815) (Burkholderia phymatum).